The following is a 628-amino-acid chain: DNA mismatch repair protein MutL (628 aa).

The tract at residues 350 to 402 is disordered; that stretch reads GLPFDVSESQGNDNHINNGKSRETKSERELYERRPNPFENRLMKESNSPSVGK. A compositionally biased stretch (polar residues) spans 356–368; that stretch reads SESQGNDNHINNG. The segment covering 369–393 has biased composition (basic and acidic residues); the sequence is KSRETKSERELYERRPNPFENRLMK.

This sequence belongs to the DNA mismatch repair MutL/HexB family.

Its function is as follows. This protein is involved in the repair of mismatches in DNA. It is required for dam-dependent methyl-directed DNA mismatch repair. May act as a 'molecular matchmaker', a protein that promotes the formation of a stable complex between two or more DNA-binding proteins in an ATP-dependent manner without itself being part of a final effector complex. The sequence is that of DNA mismatch repair protein MutL from Wolbachia sp. subsp. Brugia malayi (strain TRS).